The following is a 436-amino-acid chain: 3-ketoacyl-CoA thiolase (436 aa).

The active-site Acyl-thioester intermediate is the Cys-99. Residues His-392 and Cys-422 each act as proton acceptor in the active site.

Belongs to the thiolase-like superfamily. Thiolase family. Heterotetramer of two alpha chains (FadJ) and two beta chains (FadI).

It is found in the cytoplasm. It catalyses the reaction an acyl-CoA + acetyl-CoA = a 3-oxoacyl-CoA + CoA. It participates in lipid metabolism; fatty acid beta-oxidation. Functionally, catalyzes the final step of fatty acid oxidation in which acetyl-CoA is released and the CoA ester of a fatty acid two carbons shorter is formed. This is 3-ketoacyl-CoA thiolase from Shigella dysenteriae serotype 1 (strain Sd197).